A 108-amino-acid polypeptide reads, in one-letter code: PTS system galactose-specific EIIB component (108 aa).

Residues 3–108 enclose the PTS EIIB type-3 domain; the sequence is DKVIALACAA…VLAAAENLMN (106 aa). Catalysis depends on C10, which acts as the Phosphocysteine intermediate. C10 carries the phosphocysteine; by EIIA modification.

It catalyses the reaction N(pros)-phospho-L-histidyl-[protein] + D-galactose(out) = D-galactose 6-phosphate(in) + L-histidyl-[protein]. Its function is as follows. The phosphoenolpyruvate-dependent sugar phosphotransferase system (sugar PTS), a major carbohydrate active transport system, catalyzes the phosphorylation of incoming sugar substrates concomitantly with their translocation across the cell membrane. Involved in galactose transport with PtcA and Lmg_0963. This Lactococcus lactis subsp. cremoris (strain MG1363) protein is PTS system galactose-specific EIIB component.